We begin with the raw amino-acid sequence, 153 residues long: uncharacterized protein (153 aa).

2 disordered regions span residues 30–66 (GPTV…RKGD) and 79–153 (IKEN…DYDD). Acidic residues predominate over residues 45-56 (EDSDGSDKEDEQ). 2 stretches are compositionally biased toward polar residues: residues 106-116 (GDTTSGVNACS) and 130-144 (GTKS…SSLL).

This is an uncharacterized protein from Xenopus laevis (African clawed frog).